The following is a 504-amino-acid chain: MATPVVALVGRPNVGKSTLFNRLTRTRDALVADFPGLTRDRKYGHAHIAGYDFIVIDTGGIDGTEEGVEEKMAEQSLLAIDEADIVLFLVDARAGLTAADIGIANYLRQRQNKITVVVANKTDGIDADSHCAEFYQLGLGEIEQIAASQGRGVTQLMEQVLAPFAEKMENADENDRTSEEEQDEWEQEFDFDSEEDTALIDDALDEELEEEQDKNIKIAIVGRPNVGKSTLTNRILGEDRVVVFDMPGTTRDSIYIPMERDGQQYTLIDTAGVRKRGKVHLAVEKFSVIKTLQAIQDANVVLLTIDARENISDQDLSLLGFILNAGRSLVIVVNKWDGLDQDVKDRVKSELDRRLDFIDFARVHFISALHGSGVGNLFDSIKEAYACATQKMTTSLLTRILQMATDEHQPPMIGGRRIKLKYAHPGGYNPPIIVVHGNQMDKLPDSYKRYLSNYYRKSLKIIGSPIRLLFQEGSNPFAGRKNKLTPNQLRKRKRLMKFIKKAKR.

Residues 4 to 168 (PVVALVGRPN…QVLAPFAEKM (165 aa)) enclose the EngA-type G 1 domain. GTP is bound by residues 10 to 17 (GRPNVGKS), 57 to 61 (DTGGI), and 120 to 123 (NKTD). Residues 168–179 (MENADENDRTSE) are compositionally biased toward basic and acidic residues. The disordered stretch occupies residues 168-191 (MENADENDRTSEEEQDEWEQEFDF). Positions 180-191 (EEQDEWEQEFDF) are enriched in acidic residues. Residues 216–389 (IKIAIVGRPN…SIKEAYACAT (174 aa)) enclose the EngA-type G 2 domain. GTP is bound by residues 222 to 229 (GRPNVGKS), 269 to 273 (DTAGV), and 334 to 337 (NKWD). The KH-like domain maps to 390-474 (QKMTTSLLTR…PIRLLFQEGS (85 aa)).

Belongs to the TRAFAC class TrmE-Era-EngA-EngB-Septin-like GTPase superfamily. EngA (Der) GTPase family. As to quaternary structure, associates with the 50S ribosomal subunit.

GTPase that plays an essential role in the late steps of ribosome biogenesis. The chain is GTPase Der from Haemophilus influenzae (strain ATCC 51907 / DSM 11121 / KW20 / Rd).